The chain runs to 294 residues: Gene 15 protein (294 aa).

The chain is Gene 15 protein (15) from Mycobacterium phage L5 (Mycobacteriophage L5).